The chain runs to 208 residues: Germin-like protein subfamily 3 member 1 (208 aa).

Residues 1 to 18 form the signal peptide; it reads MLRTIFLLSLLFALSNAS. Cys23 and Cys38 form a disulfide bridge. The Cupin type-1 domain occupies 52–198; sequence SGLGTPGNTT…TTFLDATTVK (147 aa). A glycan (N-linked (GlcNAc...) asparagine) is linked at Asn59. Mn(2+) is bound by residues His100, His102, Glu107, and His146.

The protein belongs to the germin family. As to quaternary structure, may not form oligomer. As to expression, expressed during germination, and also in green shoots, etiolated seedlings and whole seedlings.

Its subcellular location is the secreted. The protein localises to the extracellular space. It localises to the apoplast. Functionally, may play a role in plant defense. Probably has no oxalate oxidase activity even if the active site is conserved. This Arabidopsis thaliana (Mouse-ear cress) protein is Germin-like protein subfamily 3 member 1 (GLP1).